A 62-amino-acid chain; its full sequence is Large ribosomal subunit protein uL29 (62 aa).

The protein belongs to the universal ribosomal protein uL29 family.

This is Large ribosomal subunit protein uL29 from Vesicomyosocius okutanii subsp. Calyptogena okutanii (strain HA).